Consider the following 208-residue polypeptide: MTLIPIVIEQTSRGERAYDIYSRLVKERIIFVTGPVEDNMASVIVAQLLFLESENPDKDIYMYINSPGGVVTAGLSIYDTMQYIKPDVSTLCIGQAASMGSLLLAAGTEGKRYSLPHSRIMIHQPSGGYQGQATDIEIHANEILRVKRKLNQIYEKHTGNSLKKIEGMMERDKFMDPEEARRIGLIDRVIAERKDIKVENIKVEQKVG.

Ser-98 serves as the catalytic Nucleophile. His-123 is a catalytic residue.

The protein belongs to the peptidase S14 family. Fourteen ClpP subunits assemble into 2 heptameric rings which stack back to back to give a disk-like structure with a central cavity, resembling the structure of eukaryotic proteasomes.

The protein localises to the cytoplasm. It carries out the reaction Hydrolysis of proteins to small peptides in the presence of ATP and magnesium. alpha-casein is the usual test substrate. In the absence of ATP, only oligopeptides shorter than five residues are hydrolyzed (such as succinyl-Leu-Tyr-|-NHMec, and Leu-Tyr-Leu-|-Tyr-Trp, in which cleavage of the -Tyr-|-Leu- and -Tyr-|-Trp bonds also occurs).. Functionally, cleaves peptides in various proteins in a process that requires ATP hydrolysis. Has a chymotrypsin-like activity. Plays a major role in the degradation of misfolded proteins. The chain is ATP-dependent Clp protease proteolytic subunit from Wolbachia sp. subsp. Brugia malayi (strain TRS).